The sequence spans 570 residues: Coiled-coil domain-containing protein 22 homolog (570 aa).

Disordered stretches follow at residues 110–129 (RQSE…REQL) and 234–280 (LTST…PLEL). A compositionally biased stretch (polar residues) spans 248-257 (TSPTQTSTTA). Positions 265 to 276 (SSEATATSTTTT) are enriched in low complexity. 2 coiled-coil regions span residues 308–471 (ELKI…LQRQ) and 529–570 (GEKL…ITVG).

This sequence belongs to the CCDC22 family.

The chain is Coiled-coil domain-containing protein 22 homolog from Drosophila willistoni (Fruit fly).